Here is a 185-residue protein sequence, read N- to C-terminus: Elongation factor P (185 aa).

This sequence belongs to the elongation factor P family.

It localises to the cytoplasm. Its pathway is protein biosynthesis; polypeptide chain elongation. Involved in peptide bond synthesis. Stimulates efficient translation and peptide-bond synthesis on native or reconstituted 70S ribosomes in vitro. Probably functions indirectly by altering the affinity of the ribosome for aminoacyl-tRNA, thus increasing their reactivity as acceptors for peptidyl transferase. This is Elongation factor P from Alkaliphilus metalliredigens (strain QYMF).